Reading from the N-terminus, the 418-residue chain is cAMP-dependent protein kinase type II-beta regulatory subunit (418 aa).

The dimerization and phosphorylation stretch occupies residues 2–153 (SIEIPAGLTE…RLQEACKDIL (152 aa)). Basic and acidic residues predominate over residues 45 to 57 (RKGTARFGHEGRT). Residues 45 to 98 (RKGTARFGHEGRTWGDAGAAGGGGTPSKGVNFAEEPRHSDSENGEEEEEEAADA) are disordered. T69 carries the phosphothreonine modification. Phosphoserine is present on residues S83 and S85. Over residues 86-96 (ENGEEEEEEAA) the composition is skewed to acidic residues. S114 carries the phosphoserine modification. 3',5'-cyclic AMP is bound by residues 154–275 (LFKN…ESLP), E223, R232, 276–418 (FLKS…EPTA), E352, and R361.

It belongs to the cAMP-dependent kinase regulatory chain family. As to quaternary structure, the inactive form of the enzyme is composed of two regulatory chains and two catalytic chains. Activation by cAMP produces two active catalytic monomers and a regulatory dimer that binds four cAMP molecules. Interacts with PRKACA and PRKACB. Interacts with the phosphorylated form of PJA2. Forms a complex composed of PRKAR2B, GSK3B and GSKIP through GSKIP interaction; facilitates PKA-induced phosphorylation and regulates GSK3B activity. Phosphorylated by the activated catalytic chain. Four types of regulatory chains are found: I-alpha, I-beta, II-alpha, and II-beta. Their expression varies among tissues and is in some cases constitutive and in others inducible.

It is found in the cytoplasm. The protein localises to the cell membrane. Its function is as follows. Regulatory subunit of the cAMP-dependent protein kinases involved in cAMP signaling in cells. Type II regulatory chains mediate membrane association by binding to anchoring proteins, including the MAP2 kinase. The protein is cAMP-dependent protein kinase type II-beta regulatory subunit (PRKAR2B) of Bos taurus (Bovine).